Here is a 394-residue protein sequence, read N- to C-terminus: Acetate kinase (394 aa).

Asn10 lines the Mg(2+) pocket. Lys17 provides a ligand contact to ATP. Residue Arg87 coordinates substrate. Asp144 serves as the catalytic Proton donor/acceptor. ATP-binding positions include 204–208 (HLGNG), 279–281 (DMR), and 327–331 (GIGEN). Glu381 serves as a coordination point for Mg(2+).

The protein belongs to the acetokinase family. Homodimer. It depends on Mg(2+) as a cofactor. Requires Mn(2+) as cofactor.

It localises to the cytoplasm. It carries out the reaction acetate + ATP = acetyl phosphate + ADP. It participates in metabolic intermediate biosynthesis; acetyl-CoA biosynthesis; acetyl-CoA from acetate: step 1/2. In terms of biological role, catalyzes the formation of acetyl phosphate from acetate and ATP. Can also catalyze the reverse reaction. The chain is Acetate kinase from Pseudomonas aeruginosa (strain LESB58).